Consider the following 261-residue polypeptide: Cytochrome c oxidase subunit 3 (261 aa).

Residues 1–15 (MAHQSHAYHMVKPSP) are Mitochondrial matrix-facing. Residues 16–34 (WPLTGALSALLTTSGLTMW) form a helical membrane-spanning segment. The Mitochondrial intermembrane portion of the chain corresponds to 35–40 (FHFHST). The chain crosses the membrane as a helical span at residues 41–66 (TLLLTGLLTNALTMYQWWRDVVREST). Residues 67–72 (YQGHHT) are Mitochondrial matrix-facing. Residues 73–105 (LPVQKGLRYGMILFITSEVFFFAGFFWAFYHSS) form a helical membrane-spanning segment. At 106-128 (LAPTPQLGGHWPPTGIIPLNPLE) the chain is on the mitochondrial intermembrane side. A helical membrane pass occupies residues 129 to 152 (VPLLNTSVLLASGVSITWAHHSLM). Residues 153–155 (ENN) lie on the Mitochondrial matrix side of the membrane. A helical transmembrane segment spans residues 156–183 (RTQMIQALLITILLGIYFTLLQASEYIE). Residues 184 to 190 (APFTISD) lie on the Mitochondrial intermembrane side of the membrane. The chain crosses the membrane as a helical span at residues 191–223 (GIYGSTFFMATGFHGLHVIIGSTFLTVCLARQL). Topologically, residues 224–232 (LFHFTSKHH) are mitochondrial matrix. A helical membrane pass occupies residues 233 to 256 (FGFEAAAWYWHFVDVVWLFLYVSI). Topologically, residues 257-261 (YWWGS) are mitochondrial intermembrane.

The protein belongs to the cytochrome c oxidase subunit 3 family. Component of the cytochrome c oxidase (complex IV, CIV), a multisubunit enzyme composed of 14 subunits. The complex is composed of a catalytic core of 3 subunits MT-CO1, MT-CO2 and MT-CO3, encoded in the mitochondrial DNA, and 11 supernumerary subunits COX4I, COX5A, COX5B, COX6A, COX6B, COX6C, COX7A, COX7B, COX7C, COX8 and NDUFA4, which are encoded in the nuclear genome. The complex exists as a monomer or a dimer and forms supercomplexes (SCs) in the inner mitochondrial membrane with NADH-ubiquinone oxidoreductase (complex I, CI) and ubiquinol-cytochrome c oxidoreductase (cytochrome b-c1 complex, complex III, CIII), resulting in different assemblies (supercomplex SCI(1)III(2)IV(1) and megacomplex MCI(2)III(2)IV(2)).

The protein localises to the mitochondrion inner membrane. The enzyme catalyses 4 Fe(II)-[cytochrome c] + O2 + 8 H(+)(in) = 4 Fe(III)-[cytochrome c] + 2 H2O + 4 H(+)(out). Component of the cytochrome c oxidase, the last enzyme in the mitochondrial electron transport chain which drives oxidative phosphorylation. The respiratory chain contains 3 multisubunit complexes succinate dehydrogenase (complex II, CII), ubiquinol-cytochrome c oxidoreductase (cytochrome b-c1 complex, complex III, CIII) and cytochrome c oxidase (complex IV, CIV), that cooperate to transfer electrons derived from NADH and succinate to molecular oxygen, creating an electrochemical gradient over the inner membrane that drives transmembrane transport and the ATP synthase. Cytochrome c oxidase is the component of the respiratory chain that catalyzes the reduction of oxygen to water. Electrons originating from reduced cytochrome c in the intermembrane space (IMS) are transferred via the dinuclear copper A center (CU(A)) of subunit 2 and heme A of subunit 1 to the active site in subunit 1, a binuclear center (BNC) formed by heme A3 and copper B (CU(B)). The BNC reduces molecular oxygen to 2 water molecules using 4 electrons from cytochrome c in the IMS and 4 protons from the mitochondrial matrix. The polypeptide is Cytochrome c oxidase subunit 3 (MT-CO3) (Pongo abelii (Sumatran orangutan)).